A 138-amino-acid polypeptide reads, in one-letter code: Small ribosomal subunit protein uS11c (138 aa).

A disordered region spans residues 1–22 (MAKSIPRISSRRNGRIGSGNNV).

Belongs to the universal ribosomal protein uS11 family. As to quaternary structure, part of the 30S ribosomal subunit.

The protein resides in the plastid. In Cuscuta reflexa (Southern Asian dodder), this protein is Small ribosomal subunit protein uS11c.